Consider the following 269-residue polypeptide: Phosphate import ATP-binding protein PstB 1 (269 aa).

An ABC transporter domain is found at 16–255; that stretch reads FTTQNLDIYY…DRTGKVFGDP (240 aa). 48 to 55 serves as a coordination point for ATP; sequence GPSGCGKS.

This sequence belongs to the ABC transporter superfamily. Phosphate importer (TC 3.A.1.7) family. The complex is composed of two ATP-binding proteins (PstB), two transmembrane proteins (PstC and PstA) and a solute-binding protein (PstS).

The protein resides in the cell inner membrane. The catalysed reaction is phosphate(out) + ATP + H2O = ADP + 2 phosphate(in) + H(+). Its function is as follows. Part of the ABC transporter complex PstSACB involved in phosphate import. Responsible for energy coupling to the transport system. This chain is Phosphate import ATP-binding protein PstB 1, found in Synechocystis sp. (strain ATCC 27184 / PCC 6803 / Kazusa).